The sequence spans 257 residues: NAD kinase (257 aa).

D46 functions as the Proton acceptor in the catalytic mechanism. NAD(+) contacts are provided by residues 46–47 (DG), H51, 116–117 (NE), D146, A154, 157–162 (TAYNLS), and Q218.

The protein belongs to the NAD kinase family. Requires a divalent metal cation as cofactor.

It localises to the cytoplasm. The enzyme catalyses NAD(+) + ATP = ADP + NADP(+) + H(+). In terms of biological role, involved in the regulation of the intracellular balance of NAD and NADP, and is a key enzyme in the biosynthesis of NADP. Catalyzes specifically the phosphorylation on 2'-hydroxyl of the adenosine moiety of NAD to yield NADP. The polypeptide is NAD kinase (Rhizobium meliloti (strain 1021) (Ensifer meliloti)).